The following is a 224-amino-acid chain: Thiamine-phosphate synthase (224 aa).

4-amino-2-methyl-5-(diphosphooxymethyl)pyrimidine is bound by residues 44 to 48 (QFREK) and N79. Mg(2+) is bound by residues D80 and D99. Residue S117 participates in 4-amino-2-methyl-5-(diphosphooxymethyl)pyrimidine binding. 143 to 145 (TET) is a 2-[(2R,5Z)-2-carboxy-4-methylthiazol-5(2H)-ylidene]ethyl phosphate binding site. K146 lines the 4-amino-2-methyl-5-(diphosphooxymethyl)pyrimidine pocket. 2-[(2R,5Z)-2-carboxy-4-methylthiazol-5(2H)-ylidene]ethyl phosphate is bound by residues G175 and 195–196 (IS).

The protein belongs to the thiamine-phosphate synthase family. Mg(2+) is required as a cofactor.

The catalysed reaction is 2-[(2R,5Z)-2-carboxy-4-methylthiazol-5(2H)-ylidene]ethyl phosphate + 4-amino-2-methyl-5-(diphosphooxymethyl)pyrimidine + 2 H(+) = thiamine phosphate + CO2 + diphosphate. The enzyme catalyses 2-(2-carboxy-4-methylthiazol-5-yl)ethyl phosphate + 4-amino-2-methyl-5-(diphosphooxymethyl)pyrimidine + 2 H(+) = thiamine phosphate + CO2 + diphosphate. It catalyses the reaction 4-methyl-5-(2-phosphooxyethyl)-thiazole + 4-amino-2-methyl-5-(diphosphooxymethyl)pyrimidine + H(+) = thiamine phosphate + diphosphate. Its pathway is cofactor biosynthesis; thiamine diphosphate biosynthesis; thiamine phosphate from 4-amino-2-methyl-5-diphosphomethylpyrimidine and 4-methyl-5-(2-phosphoethyl)-thiazole: step 1/1. Condenses 4-methyl-5-(beta-hydroxyethyl)thiazole monophosphate (THZ-P) and 2-methyl-4-amino-5-hydroxymethyl pyrimidine pyrophosphate (HMP-PP) to form thiamine monophosphate (TMP). This Bacillus licheniformis (strain ATCC 14580 / DSM 13 / JCM 2505 / CCUG 7422 / NBRC 12200 / NCIMB 9375 / NCTC 10341 / NRRL NRS-1264 / Gibson 46) protein is Thiamine-phosphate synthase.